The chain runs to 72 residues: TKCYITPDVKSETCPDGENICYTKSWCDVFCTSRGKRIDLGCAATCPKVKPGVDIKCCSTDNCNPFTPWKRH.

5 disulfides stabilise this stretch: Cys3–Cys21, Cys14–Cys42, Cys27–Cys31, Cys46–Cys57, and Cys58–Cys63.

The protein belongs to the three-finger toxin family. Long-chain subfamily. Type II alpha-neurotoxin sub-subfamily. As to expression, expressed by the venom gland.

Its subcellular location is the secreted. In terms of biological role, binds with high affinity to muscular (alpha-1/CHRNA1) and neuronal (alpha-7/CHRNA7) nicotinic acetylcholine receptor (nAChR) and inhibits acetylcholine from binding to the receptor, thereby impairing neuromuscular and neuronal transmission. The chain is Long neurotoxin OH-17 from Ophiophagus hannah (King cobra).